The sequence spans 136 residues: Large ribosomal subunit protein eL27 (136 aa).

Residues 5 to 40 (MKPGKVVLVLAGRYSGRKAVIVKNIDDGTSDRPYSH) enclose the KOW domain. 2 positions are modified to N6-acetyllysine: lysine 27 and lysine 93.

The protein belongs to the eukaryotic ribosomal protein eL27 family. As to quaternary structure, component of the large ribosomal subunit. Interacts with RRP1B. Component of the large ribosomal subunit. Interacts with RRP1B. Interacts with DHX33.

Its subcellular location is the cytoplasm. It is found in the cytosol. The protein localises to the rough endoplasmic reticulum. In terms of biological role, component of the large ribosomal subunit. Required for proper rRNA processing and maturation of 28S and 5.8S rRNAs. This is Large ribosomal subunit protein eL27 (RPL27) from Canis lupus familiaris (Dog).